Reading from the N-terminus, the 414-residue chain is E3 ubiquitin-protein ligase makorin-2 (414 aa).

2 C3H1-type zinc fingers span residues 2-29 (STKQ…HDLT) and 31-58 (SKPS…HIKP). The tract at residues 57 to 94 (KPPGRGSGAPADHSNRSSSSAGASAPGPGPPANTSKHL) is disordered. Residues 73-82 (SSSSAGASAP) are compositionally biased toward low complexity. The C3H1-type 3 zinc finger occupies 164–191 (QTSPQICPFLAAGQCQYGESCPYLHGEM). The segment at 192 to 221 (CEICRQHVLHPHDPEQRAAHEKKCMVAFEM) is makorin-type Cys-His. An RING-type zinc finger spans residues 237 to 291 (CKICLDVVYEKSSPSERRFGILSSCAHTYCLNCIRQWRCVEQLHNQIRKSCPECR). The C3H1-type 4 zinc-finger motif lies at 320 to 349 (GVSKKACKYFDQGRGTCPFGGKCFYMHAYA).

It localises to the cytoplasm. The protein resides in the nucleus. It catalyses the reaction S-ubiquitinyl-[E2 ubiquitin-conjugating enzyme]-L-cysteine + [acceptor protein]-L-lysine = [E2 ubiquitin-conjugating enzyme]-L-cysteine + N(6)-ubiquitinyl-[acceptor protein]-L-lysine.. The protein operates within protein modification; protein ubiquitination. In terms of biological role, E3 ubiquitin ligase catalyzing the covalent attachment of ubiquitin moieties onto substrate proteins. Inhibits neurogenesis and axis formation during embryonic development by modulating the phosphatidylinositol 3-kinase (PI3K) pathway. Acts downstream of PI3K and akt1 to up-regulate gsk3b mRNA expression. The sequence is that of E3 ubiquitin-protein ligase makorin-2 (mkrn2) from Danio rerio (Zebrafish).